A 277-amino-acid chain; its full sequence is Phosphatidylglycerol--prolipoprotein diacylglyceryl transferase (277 aa).

A run of 3 helical transmembrane segments spans residues 17 to 37 (LAIH…MLLG), 63 to 83 (ILFL…CLFY), and 101 to 121 (GGMA…WFAH). Arg146 is a binding site for a 1,2-diacyl-sn-glycero-3-phospho-(1'-sn-glycerol). The next 3 membrane-spanning stretches (helical) occupy residues 182-202 (SQVY…WLYA), 209-229 (GQVA…AEQF), and 234-254 (AFLG…LPMI).

Belongs to the Lgt family.

The protein localises to the cell inner membrane. The enzyme catalyses L-cysteinyl-[prolipoprotein] + a 1,2-diacyl-sn-glycero-3-phospho-(1'-sn-glycerol) = an S-1,2-diacyl-sn-glyceryl-L-cysteinyl-[prolipoprotein] + sn-glycerol 1-phosphate + H(+). It functions in the pathway protein modification; lipoprotein biosynthesis (diacylglyceryl transfer). Its function is as follows. Catalyzes the transfer of the diacylglyceryl group from phosphatidylglycerol to the sulfhydryl group of the N-terminal cysteine of a prolipoprotein, the first step in the formation of mature lipoproteins. The chain is Phosphatidylglycerol--prolipoprotein diacylglyceryl transferase from Verminephrobacter eiseniae (strain EF01-2).